The sequence spans 198 residues: Molybdenum cofactor guanylyltransferase (198 aa).

GTP-binding positions include 14–16 (LAG), lysine 27, aspartate 73, and aspartate 103. Aspartate 103 provides a ligand contact to Mg(2+).

This sequence belongs to the MobA family. Monomer. Requires Mg(2+) as cofactor.

Its subcellular location is the cytoplasm. It catalyses the reaction Mo-molybdopterin + GTP + H(+) = Mo-molybdopterin guanine dinucleotide + diphosphate. Functionally, transfers a GMP moiety from GTP to Mo-molybdopterin (Mo-MPT) cofactor (Moco or molybdenum cofactor) to form Mo-molybdopterin guanine dinucleotide (Mo-MGD) cofactor. The protein is Molybdenum cofactor guanylyltransferase of Pseudomonas paraeruginosa (strain DSM 24068 / PA7) (Pseudomonas aeruginosa (strain PA7)).